The chain runs to 482 residues: tRNA sulfurtransferase (482 aa).

Residues 61-165 (LAIRDALTRI…DDRLLLIKGR (105 aa)) enclose the THUMP domain. ATP is bound by residues 183–184 (LI), Lys-265, Gly-287, and Gln-296. Residues Cys-344 and Cys-456 are joined by a disulfide bond. The Rhodanese domain maps to 404–482 (FGPNDVILDI…GFNNVKVYRP (79 aa)). The active-site Cysteine persulfide intermediate is the Cys-456.

This sequence belongs to the ThiI family.

It localises to the cytoplasm. The enzyme catalyses [ThiI sulfur-carrier protein]-S-sulfanyl-L-cysteine + a uridine in tRNA + 2 reduced [2Fe-2S]-[ferredoxin] + ATP + H(+) = [ThiI sulfur-carrier protein]-L-cysteine + a 4-thiouridine in tRNA + 2 oxidized [2Fe-2S]-[ferredoxin] + AMP + diphosphate. The catalysed reaction is [ThiS sulfur-carrier protein]-C-terminal Gly-Gly-AMP + S-sulfanyl-L-cysteinyl-[cysteine desulfurase] + AH2 = [ThiS sulfur-carrier protein]-C-terminal-Gly-aminoethanethioate + L-cysteinyl-[cysteine desulfurase] + A + AMP + 2 H(+). Its pathway is cofactor biosynthesis; thiamine diphosphate biosynthesis. Functionally, catalyzes the ATP-dependent transfer of a sulfur to tRNA to produce 4-thiouridine in position 8 of tRNAs, which functions as a near-UV photosensor. Also catalyzes the transfer of sulfur to the sulfur carrier protein ThiS, forming ThiS-thiocarboxylate. This is a step in the synthesis of thiazole, in the thiamine biosynthesis pathway. The sulfur is donated as persulfide by IscS. The chain is tRNA sulfurtransferase from Shigella sonnei (strain Ss046).